A 408-amino-acid chain; its full sequence is 8-amino-7-oxononanoate synthase (408 aa).

Arg-20 is a binding site for substrate. 119–120 lines the pyridoxal 5'-phosphate pocket; it reads GY. His-144 contributes to the substrate binding site. Pyridoxal 5'-phosphate is bound by residues Ser-190, His-218, and Thr-246. Lys-249 is modified (N6-(pyridoxal phosphate)lysine). A substrate-binding site is contributed by Thr-372.

Belongs to the class-II pyridoxal-phosphate-dependent aminotransferase family. BioF subfamily. Homodimer. Pyridoxal 5'-phosphate is required as a cofactor.

It carries out the reaction 6-carboxyhexanoyl-[ACP] + L-alanine + H(+) = (8S)-8-amino-7-oxononanoate + holo-[ACP] + CO2. It functions in the pathway cofactor biosynthesis; biotin biosynthesis. Functionally, catalyzes the decarboxylative condensation of pimeloyl-[acyl-carrier protein] and L-alanine to produce 8-amino-7-oxononanoate (AON), [acyl-carrier protein], and carbon dioxide. This is 8-amino-7-oxononanoate synthase from Leptothrix cholodnii (strain ATCC 51168 / LMG 8142 / SP-6) (Leptothrix discophora (strain SP-6)).